Here is a 145-residue protein sequence, read N- to C-terminus: 3-hydroxyacyl-[acyl-carrier-protein] dehydratase FabZ (145 aa).

His49 is an active-site residue.

This sequence belongs to the thioester dehydratase family. FabZ subfamily.

The protein resides in the cytoplasm. The enzyme catalyses a (3R)-hydroxyacyl-[ACP] = a (2E)-enoyl-[ACP] + H2O. In terms of biological role, involved in unsaturated fatty acids biosynthesis. Catalyzes the dehydration of short chain beta-hydroxyacyl-ACPs and long chain saturated and unsaturated beta-hydroxyacyl-ACPs. The sequence is that of 3-hydroxyacyl-[acyl-carrier-protein] dehydratase FabZ from Rickettsia typhi (strain ATCC VR-144 / Wilmington).